The primary structure comprises 350 residues: Cephaeline 6'-O-methyltransferase CiOMT (350 aa).

Glycine 193, aspartate 216, aspartate 236, methionine 237, and lysine 250 together coordinate S-adenosyl-L-methionine. Histidine 254 (proton acceptor) is an active-site residue.

Belongs to the class I-like SAM-binding methyltransferase superfamily. Cation-independent O-methyltransferase family.

It localises to the cytoplasm. The protein resides in the cytosol. The catalysed reaction is 7'-O-demethylcephaeline + S-adenosyl-L-methionine = cephaeline + S-adenosyl-L-homocysteine + H(+). The enzyme catalyses cephaeline + S-adenosyl-L-methionine = emetine + S-adenosyl-L-homocysteine + H(+). Its pathway is alkaloid biosynthesis. With respect to regulation, inhibited by Co(2+), Ni(2+), Zn(2+) and Mn(2+) ions. O-methyltransferase involved in the biosynthesis of ipecac and benzylisoquinoline monoterpenoid-isoquinoline alkaloids natural products, starting by the condensation of dopamine and secologanin, and including emetine and cephaeline, drugs used both as anti-protozoal (e.g. treatment of ameobiasis) and as emetic agents. Catalyzes successively the 7'-O-methylation of 7'-O-demethylcephaeline to produce cephaeline, and its 6'-O-methylation to produce emetine. The sequence is that of Cephaeline 6'-O-methyltransferase CiOMT from Carapichea ipecacuanha (Ipecac).